The chain runs to 284 residues: Bifunctional protein FolD (284 aa).

NADP(+) is bound by residues 165–167 and Ser-190; that span reads GRS.

This sequence belongs to the tetrahydrofolate dehydrogenase/cyclohydrolase family. Homodimer.

It catalyses the reaction (6R)-5,10-methylene-5,6,7,8-tetrahydrofolate + NADP(+) = (6R)-5,10-methenyltetrahydrofolate + NADPH. The enzyme catalyses (6R)-5,10-methenyltetrahydrofolate + H2O = (6R)-10-formyltetrahydrofolate + H(+). Its pathway is one-carbon metabolism; tetrahydrofolate interconversion. In terms of biological role, catalyzes the oxidation of 5,10-methylenetetrahydrofolate to 5,10-methenyltetrahydrofolate and then the hydrolysis of 5,10-methenyltetrahydrofolate to 10-formyltetrahydrofolate. This chain is Bifunctional protein FolD, found in Streptococcus pyogenes serotype M2 (strain MGAS10270).